The sequence spans 323 residues: Mycothiol acetyltransferase (323 aa).

2 consecutive N-acetyltransferase domains span residues E21 to R176 and V173 to N323. E44 provides a ligand contact to 1D-myo-inositol 2-(L-cysteinylamino)-2-deoxy-alpha-D-glucopyranoside. An acetyl-CoA-binding site is contributed by L98–V100. 1D-myo-inositol 2-(L-cysteinylamino)-2-deoxy-alpha-D-glucopyranoside contacts are provided by E200, K240, and E253. Residues V257–V259 and Q264–K270 contribute to the acetyl-CoA site. A 1D-myo-inositol 2-(L-cysteinylamino)-2-deoxy-alpha-D-glucopyranoside-binding site is contributed by Y291.

It belongs to the acetyltransferase family. MshD subfamily. Monomer.

The enzyme catalyses 1D-myo-inositol 2-(L-cysteinylamino)-2-deoxy-alpha-D-glucopyranoside + acetyl-CoA = mycothiol + CoA + H(+). Its function is as follows. Catalyzes the transfer of acetyl from acetyl-CoA to desacetylmycothiol (Cys-GlcN-Ins) to form mycothiol. In Paenarthrobacter aurescens (strain TC1), this protein is Mycothiol acetyltransferase.